The following is a 136-amino-acid chain: Large ribosomal subunit protein uL16c (136 aa).

The protein belongs to the universal ribosomal protein uL16 family. As to quaternary structure, part of the 50S ribosomal subunit.

The protein resides in the plastid. Its subcellular location is the chloroplast. The protein is Large ribosomal subunit protein uL16c of Oryza sativa (Rice).